A 274-amino-acid chain; its full sequence is Large ribosomal subunit protein uL2 (274 aa).

Positions 224-274 (VAMNPVDHPHGGGEGRTSGGRHPVTPWGIPTKGYKTRRNKRSNKLIVQKRK) are disordered. Positions 257–274 (YKTRRNKRSNKLIVQKRK) are enriched in basic residues.

Belongs to the universal ribosomal protein uL2 family. As to quaternary structure, part of the 50S ribosomal subunit. Forms a bridge to the 30S subunit in the 70S ribosome.

Functionally, one of the primary rRNA binding proteins. Required for association of the 30S and 50S subunits to form the 70S ribosome, for tRNA binding and peptide bond formation. It has been suggested to have peptidyltransferase activity; this is somewhat controversial. Makes several contacts with the 16S rRNA in the 70S ribosome. The chain is Large ribosomal subunit protein uL2 from Francisella tularensis subsp. mediasiatica (strain FSC147).